Reading from the N-terminus, the 426-residue chain is Glucose-6-phosphate isomerase (426 aa).

Glu-282 serves as the catalytic Proton donor. Active-site residues include His-303 and Lys-417.

Belongs to the GPI family.

Its subcellular location is the cytoplasm. The catalysed reaction is alpha-D-glucose 6-phosphate = beta-D-fructose 6-phosphate. Its pathway is carbohydrate biosynthesis; gluconeogenesis. The protein operates within carbohydrate degradation; glycolysis; D-glyceraldehyde 3-phosphate and glycerone phosphate from D-glucose: step 2/4. In terms of biological role, catalyzes the reversible isomerization of glucose-6-phosphate to fructose-6-phosphate. This Onion yellows phytoplasma (strain OY-M) protein is Glucose-6-phosphate isomerase.